The primary structure comprises 662 residues: MSLSPEKANELKQIIHDHLIKMDIHGKIRDVLTETVQGDGHHKQCLLSEEDFMHALQRRGIVNDVMKDLHFTNMYNSHTEADSVNKSATHFMDQNITQLKTANIGQLKRQLYLQVVGGKAFLEQLQEPEPLPGQVCSTFTLHVHFRNQRFRSKPIPCACEPDIQEGFLLEIHRDGPGDASKMADATTMLSICDPVHMVLIKTDTSGDTTLVSSYFLDWRTVLSAPNGKISVSAELLGVGAEAKVPAGVLNLKLELYPPLTETLSPDVVTMQKSLERQKTAEKERLFLVYAKQWWQEFLDIRPSNKSKLVKIFAQDENGVNRPVCSYVRVLRAGRLLESPRQAARFVSLLAQERAPVVGGGVRQEQWASMMVFLCRNKGDCEDHATLLCSLLLGFGLDAYVCVGTKVKNIPHTWVMTCGTDGSITFWESFTAHRYLHRPIDPDAPSMILQPKPVHPYQTLGCVFNHKIFLANCQVSDAVERCVFDFTDGSRWKAMSEEAVRSVCDPGFNTSLPPTPPLCSSSLVPNEASNQLELEMRYLLSEHRKDLGLATVWDDHLSYLLSAALSAYELERCAGVSYGNEEFQDAVRRAVPDGHTFKAFPINFLHCNARRAFATCLRSPFCEEIVCCRGDHVRLAVRVRVFGYPESACAVWIMFACKYRSVL.

It belongs to the CEP76 family.

Its subcellular location is the cytoplasm. The protein localises to the cytoskeleton. It localises to the microtubule organizing center. The protein resides in the centrosome. It is found in the centriole. Centrosomal protein involved in regulation of centriole duplication. Required to limit centriole duplication to once per cell cycle by preventing centriole reduplication. The protein is Centrosomal protein of 76 kDa (cep76) of Danio rerio (Zebrafish).